We begin with the raw amino-acid sequence, 363 residues long: Zinc finger protein 830 (363 aa).

Ala2 carries the N-acetylalanine modification. Residues 16–40 are a coiled coil; sequence VNQEELRRLMREKQRLSTNRKRIES. The C2H2-type zinc finger occupies 53–75; sequence CALCNTPVKSELLWQTHVLGKQH. A disordered region spans residues 81 to 213; that stretch reads ELKGAKGATQ…NPPKAPLVPH (133 aa). The span at 90-99 shows a compositional bias: polar residues; that stretch reads QGPSTGTVPQ. Positions 104–115 are enriched in basic and acidic residues; sequence RATDVESQDAKK. Low complexity predominate over residues 129–143; it reads SASSANLDAARAAPS. Positions 152-164 are enriched in acidic residues; the sequence is DYDDEEEEEEEGG. A compositionally biased stretch (basic and acidic residues) spans 165–184; that stretch reads GEERRDSSKHLPDAQGKEHS. Polar residues predominate over residues 189–205; it reads RETTSNVLPNDPFNTNP. Ser216 is modified (phosphoserine). Positions 303–331 form a coiled coil; that stretch reads IECYRRVEKLRNRQDEIKNKLKEVLTIKE. A phosphoserine mark is found at Ser342 and Ser353.

Component of the XAB2 complex, a multimeric protein complex composed of XAB2, PRPF19, AQR, ZNF830, ISY1, and PPIE; this complex binds preferentially to RNA. Interacts with XAB2. Identified in a pentameric intron-binding (IB) complex composed of AQR, XAB2, ISY1, ZNF830 and PPIE that is incorporated into the spliceosome as a preassembled complex. The IB complex does not contain PRPF19. In terms of processing, phosphorylated in response to DNA damage by the cell cycle checkpoint kinases ATR/ATM. As to expression, widely expressed at low level. Expressed in oocytes from primordial to antral follicles. Also detected in somatic cells of the ovary, namely, in granulosa cells from the pre-antral follicle stage onward.

It is found in the nucleus. It localises to the chromosome. The protein resides in the nucleus speckle. In terms of biological role, may play a role in pre-mRNA splicing as component of the spliceosome. Acts as an important regulator of the cell cycle that participates in the maintenance of genome integrity. During cell cycle progression in embryonic fibroblast, prevents replication fork collapse, double-strand break formation and cell cycle checkpoint activation. Controls mitotic cell cycle progression and cell survival in rapidly proliferating intestinal epithelium and embryonic stem cells. During the embryo preimplantation, controls different aspects of M phase. During early oocyte growth, plays a role in oocyte survival by preventing chromosomal breaks formation, activation of TP63 and reduction of transcription. This chain is Zinc finger protein 830, found in Mus musculus (Mouse).